The following is a 479-amino-acid chain: Probable cytosol aminopeptidase (479 aa).

Mn(2+)-binding residues include Lys-251 and Asp-256. The active site involves Lys-263. Mn(2+)-binding residues include Asp-274, Asp-333, and Glu-335. Arg-337 is an active-site residue.

Belongs to the peptidase M17 family. Requires Mn(2+) as cofactor.

The protein localises to the cytoplasm. It carries out the reaction Release of an N-terminal amino acid, Xaa-|-Yaa-, in which Xaa is preferably Leu, but may be other amino acids including Pro although not Arg or Lys, and Yaa may be Pro. Amino acid amides and methyl esters are also readily hydrolyzed, but rates on arylamides are exceedingly low.. The enzyme catalyses Release of an N-terminal amino acid, preferentially leucine, but not glutamic or aspartic acids.. Its function is as follows. Presumably involved in the processing and regular turnover of intracellular proteins. Catalyzes the removal of unsubstituted N-terminal amino acids from various peptides. This Albidiferax ferrireducens (strain ATCC BAA-621 / DSM 15236 / T118) (Rhodoferax ferrireducens) protein is Probable cytosol aminopeptidase.